The following is a 111-amino-acid chain: Dynein light chain Tctex-type (111 aa).

The protein belongs to the dynein light chain Tctex-type family. In terms of assembly, the cytoplasmic dynein complex consists of two catalytic heavy chains (HCs) and a number of non-catalytic subunits presented by intermediate chains (ICs), light intermediate chains (LICs) and light chains (LCs).

The protein resides in the cytoplasm. Its subcellular location is the cytoskeleton. Functionally, acts as one of several non-catalytic accessory components of the cytoplasmic dynein complex that are thought to be involved in linking dynein to cargos and to adapter proteins that regulate dynein function. Cytoplasmic dynein acts as a motor for the intracellular retrograde motility of vesicles and organelles along microtubules. Required for spermatid differentiation. Is not required for polarized transport in rhabdomere development and appears to be a non-essential component of the cytoplasmic dynein complex. The protein is Dynein light chain Tctex-type (Dlc90F) of Drosophila melanogaster (Fruit fly).